A 385-amino-acid chain; its full sequence is Multidrug resistance protein MdtE (385 aa).

The N-terminal stretch at Met-1–Ala-20 is a signal peptide. Cys-21 carries the N-palmitoyl cysteine lipid modification. Cys-21 carries the S-diacylglycerol cysteine lipid modification.

Belongs to the membrane fusion protein (MFP) (TC 8.A.1) family. Homotrimer. Part of the tripartite efflux system MdtEF-TolC, which is composed of an inner membrane transporter, MdtF, a membrane fusion protein, MdtE, and an outer membrane component, TolC. The complex forms a large protein conduit and can translocate molecules across both the inner and outer membranes.

The protein localises to the cell inner membrane. Functionally, part of the tripartite efflux system MdtEF-TolC, which confers resistance to various compounds. The sequence is that of Multidrug resistance protein MdtE (mdtE) from Escherichia coli O157:H7.